The primary structure comprises 116 residues: Non-specific lipid-transfer protein (116 aa).

The N-terminal stretch at 1 to 22 (MSLKLACVVVLCMVVGAPLAQG) is a signal peptide. Intrachain disulfides connect C36–C52, C53–C98, and C73–C112.

This sequence belongs to the plant LTP family.

Plant non-specific lipid-transfer proteins transfer phospholipids as well as galactolipids across membranes. May play a role in wax or cutin deposition in the cell walls of expanding epidermal cells and certain secretory tissues. This Gossypium hirsutum (Upland cotton) protein is Non-specific lipid-transfer protein.